We begin with the raw amino-acid sequence, 470 residues long: Serine hydroxymethyltransferase 5 (470 aa).

Position 244 is an N6-(pyridoxal phosphate)lysine (Lys-244).

It belongs to the SHMT family. As to quaternary structure, homotetramer. It depends on pyridoxal 5'-phosphate as a cofactor.

Its subcellular location is the cytoplasm. The enzyme catalyses (6R)-5,10-methylene-5,6,7,8-tetrahydrofolate + glycine + H2O = (6S)-5,6,7,8-tetrahydrofolate + L-serine. The protein operates within one-carbon metabolism; tetrahydrofolate interconversion. Functionally, catalyzes the interconversion of serine and glycine. The protein is Serine hydroxymethyltransferase 5 (SHM5) of Arabidopsis thaliana (Mouse-ear cress).